Reading from the N-terminus, the 303-residue chain is tRNA pseudouridine synthase B (303 aa).

The active-site Nucleophile is Asp-38.

Belongs to the pseudouridine synthase TruB family. Type 1 subfamily.

It carries out the reaction uridine(55) in tRNA = pseudouridine(55) in tRNA. Its function is as follows. Responsible for synthesis of pseudouridine from uracil-55 in the psi GC loop of transfer RNAs. The protein is tRNA pseudouridine synthase B of Oceanobacillus iheyensis (strain DSM 14371 / CIP 107618 / JCM 11309 / KCTC 3954 / HTE831).